A 264-amino-acid chain; its full sequence is tRNA pseudouridine synthase A (264 aa).

The active-site Nucleophile is aspartate 51. Tyrosine 109 provides a ligand contact to substrate.

Belongs to the tRNA pseudouridine synthase TruA family. Homodimer.

It catalyses the reaction uridine(38/39/40) in tRNA = pseudouridine(38/39/40) in tRNA. Functionally, formation of pseudouridine at positions 38, 39 and 40 in the anticodon stem and loop of transfer RNAs. This Vibrio campbellii (strain ATCC BAA-1116) protein is tRNA pseudouridine synthase A.